The sequence spans 525 residues: RNA-directed RNA polymerase (525 aa).

One can recognise a RdRp catalytic domain in the interval 72 to 272 (LVYADNIYIV…DKERLFCSAA (201 aa)).

In terms of assembly, interacts with VP3 in the cytoplasm. May exist in multiple phosphorylated forms.

It is found in the virion. The catalysed reaction is RNA(n) + a ribonucleoside 5'-triphosphate = RNA(n+1) + diphosphate. RNA-dependent RNA polymerase which is found both free and covalently attached to the genomic RNA. May also contain guanylyl and methyl transferase activities. This Gallus gallus (Chicken) protein is RNA-directed RNA polymerase (VP1).